The following is a 284-amino-acid chain: uncharacterized protein (284 aa).

The N-terminal stretch at 1-20 is a signal peptide; sequence MLHNIQSILQFLLFVSSVQA. Positions 38 to 121 constitute an Apple domain; it reads CFEFKKNYWI…FTVNFFRNIC (84 aa). Intrachain disulfides connect Cys-38–Cys-121, Cys-63–Cys-89, and Cys-67–Cys-77. N-linked (GlcNAc...) asparagine glycosylation occurs at Asn-256. Residues 264–284 traverse the membrane as a helical segment; it reads SSTGLKFTTGLLIILVVFLFL.

The protein resides in the membrane. This is an uncharacterized protein from Caenorhabditis elegans.